A 207-amino-acid polypeptide reads, in one-letter code: Large ribosomal subunit protein uL4 (207 aa).

The disordered stretch occupies residues 49 to 78 (HAVKNRSAVSGGGRKPWRQKGTGRARQGSI).

Belongs to the universal ribosomal protein uL4 family. In terms of assembly, part of the 50S ribosomal subunit.

One of the primary rRNA binding proteins, this protein initially binds near the 5'-end of the 23S rRNA. It is important during the early stages of 50S assembly. It makes multiple contacts with different domains of the 23S rRNA in the assembled 50S subunit and ribosome. Its function is as follows. Forms part of the polypeptide exit tunnel. The protein is Large ribosomal subunit protein uL4 of Streptococcus gordonii (strain Challis / ATCC 35105 / BCRC 15272 / CH1 / DL1 / V288).